The following is a 295-amino-acid chain: Polyadenylate-binding protein 2-B (295 aa).

The tract at residues 1–102 (MAAVSSVASL…EEPGELTGDQ (102 aa)) is disordered. Composition is skewed to gly residues over residues 19-31 (LRGG…GGQD) and 71-81 (GRGGSGGGAGG). Over residues 83–96 (EELEDEELEEEEPG) the composition is skewed to acidic residues. Residues 106–140 (DPELEAIKARVREMEEEAEKLKELQNEVEKQMNMS) are a coiled coil. The interval 145–295 (NAGPVIMSVE…ARATSWYTPY (151 aa)) is necessary for homooligomerization. The RRM domain maps to 162-239 (RSIYVGNVDY…RQIKVVPKRT (78 aa)).

In terms of assembly, monomer and homooligomer. Binds RNA as a monomer and oligomerizes when bound to poly(A).

It is found in the nucleus. The protein localises to the cytoplasm. Involved in the 3'-end formation of mRNA precursors (pre-mRNA) by the addition of a poly(A) tail of 200-250 nt to the upstream cleavage product. Stimulates poly(A) polymerase (PAPOLA) conferring processivity on the poly(A) tail elongation reaction and also controls the poly(A) tail length. Increases the affinity of poly(A) polymerase for RNA. Binds to poly(A) and to poly(G) with high affinity. May protect the poly(A) tail from degradation. In Xenopus laevis (African clawed frog), this protein is Polyadenylate-binding protein 2-B (pabpn1-b).